The primary structure comprises 28 residues: Turritoxin F21-2 (28 aa).

In terms of tissue distribution, expressed by the venom duct.

The protein localises to the secreted. Functionally, potent inhibitor of human alpha-3-beta-2 nAChRs (IC(50)=566.2 nM). Irreversibly inhibits the acetylcholine-induced response on human alpha-7/CHRNA7 (55% inhibition at 5.6 uM) and alpha-3-beta-2/CHRNA3-CHRNB2 (91% inhibition) nAChRs. The protein is Turritoxin F21-2 of Polystira nobilis (Sea snail).